The following is a 619-amino-acid chain: ATP-dependent zinc metalloprotease FtsH (619 aa).

The Cytoplasmic segment spans residues 1 to 11 (MDKQSKFRIKT). Residues 12 to 32 (FFKKIIFFLIIFCFFYFFNFI) traverse the membrane as a helical segment. Residues 33–131 (KKTKKITHTT…FKNYKIYTVL (99 aa)) lie on the Periplasmic side of the membrane. A helical membrane pass occupies residues 132 to 152 (NFFYDYGFFLMIIIICWIFIF). The Cytoplasmic segment spans residues 153–619 (RKIASRSSES…FKEDFASILD (467 aa)). 224 to 231 (GPPGTGKT) serves as a coordination point for ATP. Histidine 447 serves as a coordination point for Zn(2+). Glutamate 448 is a catalytic residue. Positions 451 and 522 each coordinate Zn(2+).

It in the central section; belongs to the AAA ATPase family. The protein in the C-terminal section; belongs to the peptidase M41 family. In terms of assembly, homohexamer. Requires Zn(2+) as cofactor.

The protein localises to the cell inner membrane. Its function is as follows. Acts as a processive, ATP-dependent zinc metallopeptidase for both cytoplasmic and membrane proteins. Plays a role in the quality control of integral membrane proteins. The polypeptide is ATP-dependent zinc metalloprotease FtsH (Karelsulcia muelleri (strain DMIN) (Sulcia muelleri)).